A 436-amino-acid chain; its full sequence is 3-ketoacyl-CoA thiolase (436 aa).

The Acyl-thioester intermediate role is filled by Cys99. Catalysis depends on proton acceptor residues His392 and Cys422.

Belongs to the thiolase-like superfamily. Thiolase family. As to quaternary structure, heterotetramer of two alpha chains (FadJ) and two beta chains (FadI).

Its subcellular location is the cytoplasm. It catalyses the reaction an acyl-CoA + acetyl-CoA = a 3-oxoacyl-CoA + CoA. It participates in lipid metabolism; fatty acid beta-oxidation. Functionally, catalyzes the final step of fatty acid oxidation in which acetyl-CoA is released and the CoA ester of a fatty acid two carbons shorter is formed. This chain is 3-ketoacyl-CoA thiolase, found in Aeromonas salmonicida (strain A449).